The sequence spans 271 residues: Indole-3-glycerol phosphate synthase (271 aa).

Belongs to the TrpC family.

The catalysed reaction is 1-(2-carboxyphenylamino)-1-deoxy-D-ribulose 5-phosphate + H(+) = (1S,2R)-1-C-(indol-3-yl)glycerol 3-phosphate + CO2 + H2O. It participates in amino-acid biosynthesis; L-tryptophan biosynthesis; L-tryptophan from chorismate: step 4/5. The protein is Indole-3-glycerol phosphate synthase of Lachnoclostridium phytofermentans (strain ATCC 700394 / DSM 18823 / ISDg) (Clostridium phytofermentans).